Here is a 304-residue protein sequence, read N- to C-terminus: Large ribosomal subunit protein uL18 (304 aa).

The segment at 285 to 304 (LNALNSSAGADDDDEEEDDE) is disordered. Residues 294–304 (ADDDDEEEDDE) show a composition bias toward acidic residues.

It belongs to the universal ribosomal protein uL18 family. As to quaternary structure, component of the large ribosomal subunit (LSU).

Its subcellular location is the cytoplasm. The protein resides in the nucleus. Functionally, component of the ribosome, a large ribonucleoprotein complex responsible for the synthesis of proteins in the cell. The small ribosomal subunit (SSU) binds messenger RNAs (mRNAs) and translates the encoded message by selecting cognate aminoacyl-transfer RNA (tRNA) molecules. The large subunit (LSU) contains the ribosomal catalytic site termed the peptidyl transferase center (PTC), which catalyzes the formation of peptide bonds, thereby polymerizing the amino acids delivered by tRNAs into a polypeptide chain. The nascent polypeptides leave the ribosome through a tunnel in the LSU and interact with protein factors that function in enzymatic processing, targeting, and the membrane insertion of nascent chains at the exit of the ribosomal tunnel. In Oryza sativa subsp. indica (Rice), this protein is Large ribosomal subunit protein uL18 (RPL5A).